Consider the following 340-residue polypeptide: Meiotic recombination protein DMC1/LIM15 homolog (340 aa).

126-133 (GEFRTGKT) serves as a coordination point for ATP. Arg-230 is a dsDNA binding site. Arg-230, Phe-233, Arg-236, Arg-242, and Arg-311 together coordinate ssDNA. Residues Arg-236 and Arg-242 each coordinate dsDNA.

It belongs to the RecA family. DMC1 subfamily. Double stacked ring-shaped homooctamer. Interacts with BRCA2. Interacts with the MND1-PSMC3IP heterodimer. Interacts with RAD51AP1; the interaction is direct and stimulates DMC1-mediated homologous recombination. As to expression, testis.

The protein resides in the nucleus. It localises to the chromosome. Functionally, participates in meiotic recombination, specifically in homologous strand assimilation, which is required for the resolution of meiotic double-strand breaks. In Mus musculus (Mouse), this protein is Meiotic recombination protein DMC1/LIM15 homolog.